The chain runs to 1006 residues: Beta-galactosidase (1006 aa).

The signal sequence occupies residues methionine 1–alanine 19. Asparagine 156 is a glycosylation site (N-linked (GlcNAc...) asparagine). The active-site Proton donor is glutamate 200. Glutamate 298 functions as the Nucleophile in the catalytic mechanism. N-linked (GlcNAc...) asparagine glycosylation is found at asparagine 373, asparagine 402, asparagine 422, asparagine 478, asparagine 522, asparagine 622, asparagine 739, asparagine 760, asparagine 777, and asparagine 805.

Belongs to the glycosyl hydrolase 35 family.

The catalysed reaction is Hydrolysis of terminal non-reducing beta-D-galactose residues in beta-D-galactosides.. Cleaves beta-linked terminal galactosyl residues from gangliosides, glycoproteins, and glycosaminoglycans. The polypeptide is Beta-galactosidase (lacA) (Aspergillus niger).